The primary structure comprises 543 residues: Carboxypeptidase Y homolog A (543 aa).

The N-terminal stretch at 1-17 (MKFLTTGLLATAALAAA) is a signal peptide. A propeptide spanning residues 18 to 124 (QEQQVLQAED…KLHNYDLRVK (107 aa)) is cleaved from the precursor. Disulfide bonds link Cys179–Cys419, Cys313–Cys327, Cys337–Cys360, Cys344–Cys353, and Cys382–Cys389. An N-linked (GlcNAc...) asparagine glycan is attached at Asn210. Residue Ser266 is part of the active site. Asp458 is an active-site residue. Asn509 is a glycosylation site (N-linked (GlcNAc...) asparagine). The active site involves His520.

This sequence belongs to the peptidase S10 family.

It is found in the vacuole. The catalysed reaction is Release of a C-terminal amino acid with broad specificity.. Vacuolar carboxypeptidase involved in degradation of small peptides. Digests preferentially peptides containing an aliphatic or hydrophobic residue in P1' position, as well as methionine, leucine or phenylalanine in P1 position of ester substrate. This chain is Carboxypeptidase Y homolog A (CPYA), found in Trichophyton tonsurans (Scalp ringworm fungus).